The chain runs to 192 residues: Elongation factor P (192 aa).

This sequence belongs to the elongation factor P family.

Its subcellular location is the cytoplasm. It functions in the pathway protein biosynthesis; polypeptide chain elongation. In terms of biological role, involved in peptide bond synthesis. Stimulates efficient translation and peptide-bond synthesis on native or reconstituted 70S ribosomes in vitro. Probably functions indirectly by altering the affinity of the ribosome for aminoacyl-tRNA, thus increasing their reactivity as acceptors for peptidyl transferase. The chain is Elongation factor P from Borrelia duttonii (strain Ly).